The chain runs to 221 residues: uncharacterized protein (221 aa).

The interval 40-162 (TIEVEPSPVQ…EPPEKVELSP (123 aa)) is disordered. The segment covering 47 to 60 (PVQQDNPPISSEQA) has biased composition (polar residues). Low complexity predominate over residues 82–92 (SSAQQEATAQT).

This is an uncharacterized protein from Homo sapiens (Human).